We begin with the raw amino-acid sequence, 118 residues long: Small ribosomal subunit protein uS13 (118 aa).

The disordered stretch occupies residues 94–118; it reads SLPLRGQRTKTNARTRKGPRKPIKR.

This sequence belongs to the universal ribosomal protein uS13 family. As to quaternary structure, part of the 30S ribosomal subunit. Forms a loose heterodimer with protein S19. Forms two bridges to the 50S subunit in the 70S ribosome.

In terms of biological role, located at the top of the head of the 30S subunit, it contacts several helices of the 16S rRNA. In the 70S ribosome it contacts the 23S rRNA (bridge B1a) and protein L5 of the 50S subunit (bridge B1b), connecting the 2 subunits; these bridges are implicated in subunit movement. Contacts the tRNAs in the A and P-sites. This is Small ribosomal subunit protein uS13 from Pseudoalteromonas translucida (strain TAC 125).